The primary structure comprises 397 residues: LIM/homeobox protein Lhx9 (397 aa).

LIM zinc-binding domains are found at residues 69–130 (ALCA…RFSV) and 131–193 (QRCA…LLQG). Disordered stretches follow at residues 248–272 (ENEA…RMRT), 330–365 (ENGG…LTDL), and 378–397 (SNMD…TNLF). The segment at residues 267–326 (TKRMRTSFKHHQLRTMKSYFAINHNPDAKDLKQLAQKTGLTKRVLQVWFQNARAKFRRNL) is a DNA-binding region (homeobox). The segment covering 353–365 (LTPPGTATTLTDL) has biased composition (low complexity). The segment covering 387-397 (SPSQTTLTNLF) has biased composition (polar residues).

As to quaternary structure, interacts with LDB1 and LDB2. Expressed in the dorsal thalamus and inner nuclei of the cerebellum.

Its subcellular location is the nucleus. Its function is as follows. Involved in gonadal development. The sequence is that of LIM/homeobox protein Lhx9 (Lhx9) from Mus musculus (Mouse).